Here is a 360-residue protein sequence, read N- to C-terminus: Cytokine receptor-like factor 2 (360 aa).

A signal peptide spans 1–18; the sequence is MRAVTWAIVAMLLPRVLG. Residues 27–238 are Extracellular-facing; sequence TGGVGDTLSV…PRTPGTPTPP (212 aa). A glycan (N-linked (GlcNAc...) asparagine) is linked at asparagine 62. Cysteines 77 and 90 form a disulfide. Residues 123 to 214 form the Fibronectin type-III domain; sequence RPRPPWNVTL…PSKWTGVASL (92 aa). 2 N-linked (GlcNAc...) asparagine glycosylation sites follow: asparagine 129 and asparagine 174. An intrachain disulfide couples cysteine 185 to cysteine 223. Positions 205–209 match the WSXWS motif motif; the sequence is PSKWT. Residues 239-259 traverse the membrane as a helical segment; it reads LALACGLAVALLTLVLLLALL. Topologically, residues 260–360 are cytoplasmic; it reads RMRRVKEALL…LMGDSGYTTL (101 aa). The short motif at 268 to 276 is the Box 1 motif element; it reads LLPGVPDPR.

The protein belongs to the type I cytokine receptor family. Type 5 subfamily. In terms of assembly, heterodimer of CRLF2 and IL7R. In terms of tissue distribution, expressed in all tissues examined including brain, thymus, lung, heart, muscle, stomach, small intestine, liver, kidney, spleen, testis and skin. Highest levels in thymus, liver and testis.

The protein resides in the membrane. Receptor for thymic stromal lymphopoietin (TSLP). Forms a functional complex with TSLP and IL7R which is capable of stimulating cell proliferation through activation of STAT3 and STAT5. Also activates JAK2. Implicated in the development of the hematopoietic system. The protein is Cytokine receptor-like factor 2 (Crlf2) of Rattus norvegicus (Rat).